The sequence spans 772 residues: Carnitine O-palmitoyltransferase 1, muscle isoform (772 aa).

Residues M1 to K47 are Cytoplasmic-facing. A helical transmembrane segment spans residues N48 to N73. The Mitochondrial intermembrane portion of the chain corresponds to Y74–Q102. A helical transmembrane segment spans residues T103–F122. The Cytoplasmic portion of the chain corresponds to L123–S772. The Proton acceptor role is filled by H473. Residue G555 to D567 coordinates CoA. Y589 and T602 together coordinate (R)-carnitine.

Belongs to the carnitine/choline acetyltransferase family. High expression in heart, skeletal muscle and brown adipose tissue. Also expressed in white adipose tissue, but not in liver.

It localises to the mitochondrion outer membrane. The enzyme catalyses (R)-carnitine + hexadecanoyl-CoA = O-hexadecanoyl-(R)-carnitine + CoA. It participates in lipid metabolism; fatty acid beta-oxidation. In terms of biological role, catalyzes the transfer of the acyl group of long-chain fatty acid-CoA conjugates onto carnitine, an essential step for the mitochondrial uptake of long-chain fatty acids and their subsequent beta-oxidation in the mitochondrion. In Rattus norvegicus (Rat), this protein is Carnitine O-palmitoyltransferase 1, muscle isoform (Cpt1b).